A 527-amino-acid chain; its full sequence is Cytochrome P450 monooxygenase aba2 (527 aa).

A helical transmembrane segment spans residues 26-46 (TTVAVLVTVALIAQVLWKIFF). Asn-189, Asn-420, and Asn-448 each carry an N-linked (GlcNAc...) asparagine glycan. A heme-binding site is contributed by Cys-460. An N-linked (GlcNAc...) asparagine glycan is attached at Asn-464.

It belongs to the cytochrome P450 family. Heme serves as cofactor.

The protein localises to the membrane. The protein operates within hormone biosynthesis. Cytochrome P450 monooxygenase; part of the gene cluster that mediates the biosynthesis of abscisic acid (ABA), a phytohormone that acts antagonistically toward salicylic acid (SA), jasmonic acid (JA) and ethylene (ETH) signaling, to impede plant defense responses. The first step of the pathway catalyzes the reaction from farnesyl diphosphate to alpha-ionylideneethane performed by the alpha-ionylideneethane synthase aba3 via a three-step reaction mechanism involving 2 neutral intermediates, beta-farnesene and allofarnesene. The cytochrome P450 monooxygenase aba1 might then be involved in the conversion of alpha-ionylideneethane to alpha-ionylideneacetic acid. Alpha-ionylideneacetic acid is further converted to abscisic acid in 2 steps involving the cytochrome P450 monooxygenase aba2 and the short-chain dehydrogenase/reductase aba4, via the intermediates 1'-deoxy-ABA or 1',4'-trans-diol-ABA, depending on the order of action of these 2 enzymes. Aba2 is responsible for the hydroxylation of carbon atom C-1' and aba4 might be involved in the oxidation of the C-4' carbon atom. In Botryotinia fuckeliana (strain B05.10) (Noble rot fungus), this protein is Cytochrome P450 monooxygenase aba2 (aba2).